The chain runs to 179 residues: uncharacterized protein (179 aa).

This is an uncharacterized protein from Galliformes (FAdV-1).